We begin with the raw amino-acid sequence, 467 residues long: Fumarate hydratase class II (467 aa).

Substrate is bound by residues 98–100 (SGT), Arg126, 129–132 (HPND), 139–141 (SSN), and Thr187. His188 acts as the Proton donor/acceptor in catalysis. Ser318 is a catalytic residue. Substrate contacts are provided by residues Ser319 and 324–326 (KVN).

Belongs to the class-II fumarase/aspartase family. Fumarase subfamily. As to quaternary structure, homotetramer.

It localises to the cytoplasm. It catalyses the reaction (S)-malate = fumarate + H2O. Its pathway is carbohydrate metabolism; tricarboxylic acid cycle; (S)-malate from fumarate: step 1/1. Functionally, involved in the TCA cycle. Catalyzes the stereospecific interconversion of fumarate to L-malate. The protein is Fumarate hydratase class II of Shigella flexneri.